A 558-amino-acid polypeptide reads, in one-letter code: Thermosome subunit alpha (558 aa).

The interval 536–558 is disordered; that stretch reads TEKGKKEGGEGAGAETPGAPSLE. Positions 548 to 558 are enriched in low complexity; it reads GAETPGAPSLE.

It belongs to the TCP-1 chaperonin family. As to quaternary structure, forms a Heterooligomeric complex of two stacked eight-membered rings.

In terms of biological role, molecular chaperone; binds unfolded polypeptides in vitro, and has a weak ATPase activity. This is Thermosome subunit alpha (thsA) from Sulfolobus acidocaldarius (strain ATCC 33909 / DSM 639 / JCM 8929 / NBRC 15157 / NCIMB 11770).